The following is a 338-amino-acid chain: MVGTHPANLSELLDAVLKINEQTLDDNDSAKKQELQCHPMRQALFDVLCETKEKTVLTVRNQVDETPEDPQLMRLDNMLVAEGVAGPDKGGSLGSDASGGDQADYRQKLHQIRVLYNEELRKYEEACNEFTQHVRSLLKDQSQVRPIAHKEIERMVYIIQRKFNGIQVQLKQSTCEAVMILRSRFLDARRKRRNFSKQATEVLNEYFYGHLSNPYPSEEAKEDLARQCNITVSQVSNWFGNKRIRYKKNMAKAQEEASMYAAKKNAHVTLGGMAGNPYGMLPGAAAAAGLLNPYNPMNIPGQDTLHMGMPPFDLSVYNPQLMAAAQYQQQMDNADKNS.

In terms of domain architecture, PBC spans 4–187 (THPANLSELL…VMILRSRFLD (184 aa)). Residues 11–91 (ELLDAVLKIN…EGVAGPDKGG (81 aa)) form a PBC-A region. Residues 94-187 (GSDASGGDQA…VMILRSRFLD (94 aa)) are PBC-B. Residues 188-250 (ARRKRRNFSK…NKRIRYKKNM (63 aa)) constitute a DNA-binding region (homeobox; TALE-type).

Belongs to the TALE/PBX homeobox family. As to quaternary structure, interacts with Meis protein psa-3. Interacts with homeobox protein nob-1. In terms of tissue distribution, expressed in head dopaminergic neurons.

The protein resides in the nucleus. Functionally, transcription factor that binds to the 5'-TGATNNAT(G/T)(G/A)-3' PBC/Hox lineage enhancer region of sem-2 to promote cell fate specification in the postembryonic mesoderm (also known as the M lineage). Required for the M lineage-specific expression of the transcription factor, mls-2. Required for asymmetric division of the T hypodermal cell, probably acting via the regulation of asymmetric expression of Meis protein psa-3 in concert with homeobox protein nob-1 and the Wnt-MAPK pathway. Has a role in the mig-13 pathway to promote the guidance, migration and positioning of Q neuroblasts and their descendants along the anteroposterior body axis and the anterior migration of BDU interneurons. Also required for normal vulval formation. Plays a role in regulating gene expression in dopaminergic neurons, acting in midbody PDE neurons, and acting redundantly with ceh-40 in head neurons. May activate dopamine pathway genes in concert with ETS domain-containing protein ast-1, and homeobox proteins ceh-43 and ceh-40. This Caenorhabditis elegans protein is Homeobox protein ceh-20.